The primary structure comprises 242 residues: MMKTLGAVLSLSLTLLSFGGAHAATMSFKNNCPYTVWPASFGNPQLSTTGFELASQASFQLDTPVPWSGRFWARTRCSTDASGKFVCETADCDSGQLMCNGKTGIPPATLAEFTIAAGGGQDFYDVSLVDGFNLPMSVTPQGGTGTCKMGSCAANVNLVCPSELQKIGSDGSVVACLSACVKFGEPQYCCTPPQETKEKCPPTNYSQIFHEQCPDAYSYAFDDNKGLFTCSGGPNYLITFCP.

The first 23 residues, 1-23, serve as a signal peptide directing secretion; that stretch reads MMKTLGAVLSLSLTLLSFGGAHA. Intrachain disulfides connect Cys32-Cys241, Cys77-Cys87, Cys92-Cys99, Cys147-Cys230, Cys152-Cys213, Cys160-Cys176, Cys180-Cys189, and Cys190-Cys200.

Belongs to the thaumatin family. As to expression, preferentially expressed in the abscission zone of fruit. Also expressed in leaf abscission zone.

Its subcellular location is the secreted. In terms of biological role, may be involved in protecting plant tissues from pathogen infection. The protein is Thaumatin-like protein 2 of Prunus persica (Peach).